The following is a 39-amino-acid chain: Photosystem II reaction center protein L (39 aa).

A helical transmembrane segment spans residues S18–F38.

Belongs to the PsbL family. In terms of assembly, PSII is composed of 1 copy each of membrane proteins PsbA, PsbB, PsbC, PsbD, PsbE, PsbF, PsbH, PsbI, PsbJ, PsbK, PsbL, PsbM, PsbT, PsbX, PsbY, Psb30/Ycf12, peripheral proteins PsbO, CyanoQ (PsbQ), PsbU, PsbV and a large number of cofactors. It forms dimeric complexes.

It localises to the cellular thylakoid membrane. Functionally, one of the components of the core complex of photosystem II (PSII). PSII is a light-driven water:plastoquinone oxidoreductase that uses light energy to abstract electrons from H(2)O, generating O(2) and a proton gradient subsequently used for ATP formation. It consists of a core antenna complex that captures photons, and an electron transfer chain that converts photonic excitation into a charge separation. This subunit is found at the monomer-monomer interface and is required for correct PSII assembly and/or dimerization. In Prochlorococcus marinus (strain MIT 9515), this protein is Photosystem II reaction center protein L.